A 407-amino-acid polypeptide reads, in one-letter code: Glycolate oxidase iron-sulfur subunit (407 aa).

2 4Fe-4S ferredoxin-type domains span residues Arg14–Gly47 and Leu66–Leu95. Residues Cys25, Cys28, Cys31, Cys35, Cys75, Cys78, Cys81, and Cys85 each contribute to the [4Fe-4S] cluster site.

As to quaternary structure, the glycolate oxidase likely consists of three subunits, GlcD, GlcE and GlcF. [4Fe-4S] cluster is required as a cofactor.

It localises to the cell inner membrane. It catalyses the reaction glycolate + A = glyoxylate + AH2. The catalysed reaction is (R)-lactate + A = pyruvate + AH2. Its activity is regulated as follows. In vitro the glycolate oxidase activity is inhibited by the sulfhydryl inhibitors CuSO4 and PCMB, by KCN, but not by the metal complexing agent EDTA. Component of a complex that catalyzes the oxidation of glycolate to glyoxylate. Is required for E.coli to grow on glycolate as a sole source of carbon. Is also able to oxidize D-lactate ((R)-lactate) with a similar rate. Does not link directly to O(2), and 2,6-dichloroindophenol (DCIP) and phenazine methosulfate (PMS) can act as artificial electron acceptors in vitro, but the physiological molecule that functions as a primary electron acceptor during glycolate oxidation is unknown. This chain is Glycolate oxidase iron-sulfur subunit, found in Escherichia coli (strain K12).